The following is a 212-amino-acid chain: Protein-L-isoaspartate O-methyltransferase (212 aa).

Serine 60 is a catalytic residue.

This sequence belongs to the methyltransferase superfamily. L-isoaspartyl/D-aspartyl protein methyltransferase family.

The protein resides in the cytoplasm. It catalyses the reaction [protein]-L-isoaspartate + S-adenosyl-L-methionine = [protein]-L-isoaspartate alpha-methyl ester + S-adenosyl-L-homocysteine. Functionally, catalyzes the methyl esterification of L-isoaspartyl residues in peptides and proteins that result from spontaneous decomposition of normal L-aspartyl and L-asparaginyl residues. It plays a role in the repair and/or degradation of damaged proteins. The polypeptide is Protein-L-isoaspartate O-methyltransferase (Methanococcus maripaludis (strain DSM 14266 / JCM 13030 / NBRC 101832 / S2 / LL)).